A 359-amino-acid polypeptide reads, in one-letter code: Peptide chain release factor 1 (359 aa).

Gln236 is modified (N5-methylglutamine). The segment at 288–308 (QDEQDAERKSTIGTGDRSERI) is disordered. Over residues 293-308 (AERKSTIGTGDRSERI) the composition is skewed to basic and acidic residues.

Belongs to the prokaryotic/mitochondrial release factor family. Methylated by PrmC. Methylation increases the termination efficiency of RF1.

It is found in the cytoplasm. Functionally, peptide chain release factor 1 directs the termination of translation in response to the peptide chain termination codons UAG and UAA. This Streptococcus uberis (strain ATCC BAA-854 / 0140J) protein is Peptide chain release factor 1.